Consider the following 346-residue polypeptide: 4-hydroxy-3-methylbut-2-enyl diphosphate reductase (346 aa).

Position 19 (Cys-19) interacts with [4Fe-4S] cluster. 2 residues coordinate (2E)-4-hydroxy-3-methylbut-2-enyl diphosphate: His-48 and His-84. His-48 and His-84 together coordinate dimethylallyl diphosphate. Positions 48 and 84 each coordinate isopentenyl diphosphate. Cys-106 is a [4Fe-4S] cluster binding site. (2E)-4-hydroxy-3-methylbut-2-enyl diphosphate is bound at residue His-134. His-134 lines the dimethylallyl diphosphate pocket. Position 134 (His-134) interacts with isopentenyl diphosphate. Glu-136 (proton donor) is an active-site residue. Thr-175 serves as a coordination point for (2E)-4-hydroxy-3-methylbut-2-enyl diphosphate. [4Fe-4S] cluster is bound at residue Cys-205. 4 residues coordinate (2E)-4-hydroxy-3-methylbut-2-enyl diphosphate: Ser-233, Ser-234, Asn-235, and Ser-278. Ser-233, Ser-234, Asn-235, and Ser-278 together coordinate dimethylallyl diphosphate. 4 residues coordinate isopentenyl diphosphate: Ser-233, Ser-234, Asn-235, and Ser-278.

Belongs to the IspH family. [4Fe-4S] cluster serves as cofactor.

It catalyses the reaction isopentenyl diphosphate + 2 oxidized [2Fe-2S]-[ferredoxin] + H2O = (2E)-4-hydroxy-3-methylbut-2-enyl diphosphate + 2 reduced [2Fe-2S]-[ferredoxin] + 2 H(+). It carries out the reaction dimethylallyl diphosphate + 2 oxidized [2Fe-2S]-[ferredoxin] + H2O = (2E)-4-hydroxy-3-methylbut-2-enyl diphosphate + 2 reduced [2Fe-2S]-[ferredoxin] + 2 H(+). It participates in isoprenoid biosynthesis; dimethylallyl diphosphate biosynthesis; dimethylallyl diphosphate from (2E)-4-hydroxy-3-methylbutenyl diphosphate: step 1/1. Its pathway is isoprenoid biosynthesis; isopentenyl diphosphate biosynthesis via DXP pathway; isopentenyl diphosphate from 1-deoxy-D-xylulose 5-phosphate: step 6/6. Its function is as follows. Catalyzes the conversion of 1-hydroxy-2-methyl-2-(E)-butenyl 4-diphosphate (HMBPP) into a mixture of isopentenyl diphosphate (IPP) and dimethylallyl diphosphate (DMAPP). Acts in the terminal step of the DOXP/MEP pathway for isoprenoid precursor biosynthesis. This chain is 4-hydroxy-3-methylbut-2-enyl diphosphate reductase, found in Brucella melitensis biotype 1 (strain ATCC 23456 / CCUG 17765 / NCTC 10094 / 16M).